The primary structure comprises 97 residues: Mitochondrial import inner membrane translocase subunit Tim8 A (97 aa).

The short motif at 43 to 66 (CWEKCMDKPGPKLDSRAEACFVNC) is the Twin CX3C motif element. Disulfide bonds link C43/C66 and C47/C62. Phosphoserine is present on residues S57, S87, S94, and S96.

The protein belongs to the small Tim family. As to quaternary structure, heterohexamer; composed of 3 copies of TIMM8A and 3 copies of TIMM13, named soluble 70 kDa complex. Associates with the TIM22 complex, whose core is composed of TIMM22. In terms of tissue distribution, highly expressed in fetal and adult brain, followed by fetal lung, liver and kidney. Also expressed in heart, placenta, lung, liver, kidney, pancreas, skeletal muscle and heart.

Its subcellular location is the mitochondrion inner membrane. Its function is as follows. Mitochondrial intermembrane chaperone that participates in the import and insertion of some multi-pass transmembrane proteins into the mitochondrial inner membrane. Also required for the transfer of beta-barrel precursors from the TOM complex to the sorting and assembly machinery (SAM complex) of the outer membrane. Acts as a chaperone-like protein that protects the hydrophobic precursors from aggregation and guide them through the mitochondrial intermembrane space. The TIMM8-TIMM13 complex mediates the import of proteins such as TIMM23, SLC25A12/ARALAR1 and SLC25A13/ARALAR2, while the predominant TIMM9-TIMM10 70 kDa complex mediates the import of much more proteins. Probably necessary for normal neurologic development. The sequence is that of Mitochondrial import inner membrane translocase subunit Tim8 A (TIMM8A) from Homo sapiens (Human).